A 428-amino-acid chain; its full sequence is Histone deacetylase 3 (428 aa).

The segment at 3 to 316 (KTVAYFYDPD…WTYETSLLVE (314 aa)) is histone deacetylase. Histidine 17, glycine 21, and lysine 25 together coordinate 1D-myo-inositol 1,4,5,6-tetrakisphosphate. Residue histidine 135 is part of the active site. Positions 170, 172, and 259 each coordinate Zn(2+). Arginine 265 contributes to the 1D-myo-inositol 1,4,5,6-tetrakisphosphate binding site. 2 stretches are compositionally biased toward basic and acidic residues: residues 388-405 (DRTD…ENYS) and 415-428 (DGDH…DVEI). The tract at residues 388–428 (DRTDEADAEERGPEENYSRPEAPNEFYDGDHDNDKESDVEI) is disordered. Position 424 is a phosphoserine (serine 424).

The protein belongs to the histone deacetylase family. HD type 1 subfamily. In terms of assembly, interacts with HDAC7 and HDAC9. Interacts with DAXX, KDM4A, HDAC10 and DACH1. Found in a complex with NCOR1 and NCOR2. Component of the N-Cor repressor complex, at least composed of NCOR1, NCOR2, HDAC3, TBL1X, TBL1R, CORO2A and GPS2. Interacts with BCOR, MJD2A/JHDM3A, NRIP1, PRDM6 and SRY. Interacts with BTBD14B. Interacts with GLIS2. Interacts (via the DNA-binding domain) with NR2C1; the interaction recruits phosphorylated NR2C1 to PML bodies for sumoylation. Component of the Notch corepressor complex. Interacts with CBFA2T3 and NKAP. Interacts with APEX1; the interaction is not dependent on the acetylated status of APEX1. Interacts with ZMYND15. Interacts with SMRT/NCOR2 and BCL6 on DNA enhancer elements. Interacts with INSM1. Interacts with XBP1 isoform 1; the interaction occurs in endothelial cell (EC) under disturbed flow. Interacts (via C-terminus) with CCAR2 (via N-terminus). Interacts with and deacetylates MEF2D. Interacts with BEND3. Interacts with NKAPL. Interacts with DHX36; this interaction occurs in a RNA-dependent manner. Interacts weakly with CRY1; this interaction is enhanced in the presence of FBXL3. Interacts with FBXL3 and BMAL1. Interacts with NCOR1. Interacts with RARA. Interacts with SETD5. Post-translationally, sumoylated in vitro. Deubiquitinated on 'Lys-63'-linked ubiquitin chains by USP38; leading to a decreased level of histone acetylation.

Its subcellular location is the nucleus. The protein localises to the chromosome. It localises to the cytoplasm. It is found in the cytosol. The enzyme catalyses N(6)-acetyl-L-lysyl-[histone] + H2O = L-lysyl-[histone] + acetate. It carries out the reaction N(6)-acetyl-L-lysyl-[protein] + H2O = L-lysyl-[protein] + acetate. The catalysed reaction is N(6)-(2E)-butenoyl-L-lysyl-[protein] + H2O = (2E)-2-butenoate + L-lysyl-[protein]. It catalyses the reaction N(6)-(2-hydroxyisobutanoyl)-L-lysyl-[protein] + H2O = 2-hydroxy-2-methylpropanoate + L-lysyl-[protein]. The enzyme catalyses N(6)-[(S)-lactoyl]-L-lysyl-[protein] + H2O = (S)-lactate + L-lysyl-[protein]. Its activity is regulated as follows. Inositol tetraphosphate (1D-myo-inositol 1,4,5,6-tetrakisphosphate) promotes the histone deacetylase activity by acting as an intermolecular glue between HDAC3 and NCOR2, thereby promoting its association with the N-Cor complex, a prerequisite for the histone deacetylase activity. In terms of biological role, histone deacetylase that catalyzes the deacetylation of lysine residues on the N-terminal part of the core histones (H2A, H2B, H3 and H4), and some other non-histone substrates. Histone deacetylation gives a tag for epigenetic repression and plays an important role in transcriptional regulation, cell cycle progression and developmental events. Histone deacetylases act via the formation of large multiprotein complexes, such as N-Cor repressor complex, which activate the histone deacetylase activity. Participates in the BCL6 transcriptional repressor activity by deacetylating the H3 'Lys-27' (H3K27) on enhancer elements, antagonizing EP300 acetyltransferase activity and repressing proximal gene expression. Acts as a molecular chaperone for shuttling phosphorylated NR2C1 to PML bodies for sumoylation. Contributes, together with XBP1 isoform 1, to the activation of NFE2L2-mediated HMOX1 transcription factor gene expression in a PI(3)K/mTORC2/Akt-dependent signaling pathway leading to endothelial cell (EC) survival under disturbed flow/oxidative stress. Regulates both the transcriptional activation and repression phases of the circadian clock in a deacetylase activity-independent manner. During the activation phase, promotes the accumulation of ubiquitinated BMAL1 at the E-boxes and during the repression phase, blocks FBXL3-mediated CRY1/2 ubiquitination and promotes the interaction of CRY1 and BMAL1. The NCOR1-HDAC3 complex regulates the circadian expression of the core clock gene BMAL1 and the genes involved in lipid metabolism in the liver. Also functions as deacetylase for non-histone targets, such as KAT5, MEF2D, MAPK14, RARA and STAT3. Serves as a corepressor of RARA, mediating its deacetylation and repression, leading to inhibition of RARE DNA element binding. In addition to protein deacetylase activity, also acts as a protein-lysine deacylase by recognizing other acyl groups: catalyzes removal of (2E)-butenoyl (crotonyl), lactoyl (lactyl) and 2-hydroxyisobutanoyl (2-hydroxyisobutyryl) acyl groups from lysine residues, leading to protein decrotonylation, delactylation and de-2-hydroxyisobutyrylation, respectively. Catalyzes decrotonylation of MAPRE1/EB1. Mediates delactylation NBN/NBS1, thereby inhibiting DNA double-strand breaks (DSBs) via homologous recombination (HR). The polypeptide is Histone deacetylase 3 (Mus musculus (Mouse)).